We begin with the raw amino-acid sequence, 127 residues long: Membrane-bound lysozyme inhibitor of C-type lysozyme (127 aa).

The signal sequence occupies residues 1–18 (MKKALWLLLAAVPVVLVA). Cysteine 19 carries the N-palmitoyl cysteine lipid modification. A lipid anchor (S-diacylglycerol cysteine) is attached at cysteine 19. Residues cysteine 51 and cysteine 124 are joined by a disulfide bond.

It belongs to the MliC family. Type 2 subfamily. As to quaternary structure, homodimer.

It localises to the cell outer membrane. Functionally, specifically inhibits C-type lysozymes. The protein is Membrane-bound lysozyme inhibitor of C-type lysozyme of Pseudomonas aeruginosa (strain ATCC 15692 / DSM 22644 / CIP 104116 / JCM 14847 / LMG 12228 / 1C / PRS 101 / PAO1).